Consider the following 349-residue polypeptide: Phenylalanine--tRNA ligase alpha subunit (349 aa).

Mg(2+) is bound at residue E258.

The protein belongs to the class-II aminoacyl-tRNA synthetase family. Phe-tRNA synthetase alpha subunit type 1 subfamily. Tetramer of two alpha and two beta subunits. Mg(2+) is required as a cofactor.

The protein localises to the cytoplasm. The enzyme catalyses tRNA(Phe) + L-phenylalanine + ATP = L-phenylalanyl-tRNA(Phe) + AMP + diphosphate + H(+). This Rickettsia akari (strain Hartford) protein is Phenylalanine--tRNA ligase alpha subunit.